Reading from the N-terminus, the 527-residue chain is Catalase (527 aa).

Residues M1–Q22 are compositionally biased toward basic and acidic residues. Residues M1 to G32 form a disordered region. Residue A2 is modified to N-acetylalanine. S9 carries the phosphoserine modification. K13 is modified (N6-succinyllysine). Catalysis depends on residues H75 and N148. Residues H194, S201, R203, and N213 each coordinate NADP(+). K221 bears the N6-succinyllysine mark. K233 is modified (N6-acetyllysine). Residues K237, W303, H305, and K306 each contribute to the NADP(+) site. N6-acetyllysine; alternate is present on K306. An N6-succinyllysine; alternate modification is found at K306. Y358 lines the heme pocket. Residue S434 is modified to Phosphoserine. Residue K480 is modified to N6-acetyllysine; alternate. Residue K480 is modified to N6-succinyllysine; alternate. N6-acetyllysine is present on K499. A Phosphothreonine modification is found at T511. A Phosphoserine modification is found at S517. K522 is modified (N6-succinyllysine). Positions K524–L527 match the Microbody targeting signal; atypical motif.

Belongs to the catalase family. In terms of assembly, homotetramer. Interacts (via microbody targeting signal) with PEX5, monomeric form interacts with PEX5, leading to its translocation into peroxisomes. It depends on heme as a cofactor. Requires NADP(+) as cofactor.

The protein localises to the peroxisome matrix. The catalysed reaction is 2 H2O2 = O2 + 2 H2O. Its function is as follows. Catalyzes the degradation of hydrogen peroxide (H(2)O(2)) generated by peroxisomal oxidases to water and oxygen, thereby protecting cells from the toxic effects of hydrogen peroxide. Promotes growth of cells including T-cells, B-cells, myeloid leukemia cells, melanoma cells, mastocytoma cells and normal and transformed fibroblast cells. This chain is Catalase (CAT), found in Cavia porcellus (Guinea pig).